The chain runs to 901 residues: MTTQLNINSVIENAKRVITPLSPISIFAARNPWEGLEADTFEDVAKWLRDVRDVDIFPNKALIESAVARGELDESVFNQLVTDMLLEHHYNIPQHYINLYIDNIKTLKDVPASYMNHSNVDVVADLLLEKSKRDMAESYHHYDVRPMSDAIIDEQGEPLSEQVNRQMIKWTKLYIDQFLSSWTMPKREQSFYHAWLHLAQHDHSFTKAQRQVIKGLPNDPKMTIESVLNHFSIAQEDYQAYVEGHLLALPGWAGILYYRSQQHHFEQHLLTDYLAIRLVVEQLLVGDEFKSVTKDCESRSENWFKQTVASWCYYSDMPSDVLLQHDVNEIQTFIHFAATMNKNVFKNLWLIAWEMTYESQLKQKIKAGHESVAGALDVNQVNVTENDNANQSHSVSLNATQAVDENNSELNQVGTSTKAQIAFCIDVRSEPFRRHIEAAGPFETIGIAGFFGLPIQKDAVDEQFKHDSLPVMVPPAYRIKEFADRYDMNVYRQQQQTMSSMFYTFKLMKNNVMPSLLLPELSGPFLSLSTIVNSIMPRKSRVSLQKIKQKWLKKPETKLTIDREFDRTSDLPVGFTEQEQIDFALQALKLMDLTEAFAPFVVLAGHASHSHNNPHHASLECGACGGASSGFNAKLLAMICNRPNVRQGLKQAGVYIPETTVFAAAEHHTSTDTLAWVYVPDTLSALALDAYESLNDVMPMISEHANRERLDKLPTIGRVNHPVEEAQRFASDWSEVRPEWGLAKNASFIIGRRQLTKGIDLEGRTFLHNYDWRKDKDGKLLNTIISGPALVAQWINLQYYASTVAPHFYGSGNKATQTVTSGVGVMQGNASDLMYGLSWQSVMAADRTMYHSPIRLLVVVQAPDFVVARLLANNEHFARKVSNHWLRLMSVNEEGRFKSWI.

Zn(2+)-binding residues include C424, D426, H606, and C621.

It belongs to the inorganic carbon transporter (TC 9.A.2) DabA family. In terms of assembly, forms a complex with DabB. Zn(2+) serves as cofactor.

It localises to the cell membrane. Functionally, part of an energy-coupled inorganic carbon pump. In Staphylococcus aureus (strain MRSA252), this protein is Probable inorganic carbon transporter subunit DabA.